The primary structure comprises 245 residues: tRNA pseudouridine synthase A (245 aa).

Asp-52 serves as the catalytic Nucleophile. Tyr-111 provides a ligand contact to substrate.

Belongs to the tRNA pseudouridine synthase TruA family. As to quaternary structure, homodimer.

It carries out the reaction uridine(38/39/40) in tRNA = pseudouridine(38/39/40) in tRNA. Formation of pseudouridine at positions 38, 39 and 40 in the anticodon stem and loop of transfer RNAs. In Thermotoga petrophila (strain ATCC BAA-488 / DSM 13995 / JCM 10881 / RKU-1), this protein is tRNA pseudouridine synthase A.